The following is a 446-amino-acid chain: tRNA-2-methylthio-N(6)-dimethylallyladenosine synthase (446 aa).

Residues 2 to 119 form the MTTase N-terminal domain; it reads KKIYIKTFGC…LPELIAQRRE (118 aa). Residues Cys11, Cys48, Cys82, Cys156, Cys160, and Cys163 each contribute to the [4Fe-4S] cluster site. A Radical SAM core domain is found at 142 to 376; it reads RVEGGAAFVS…RIEAQAQGVN (235 aa). The region spanning 377–440 is the TRAM domain; the sequence is RSMVGSVQRV…PHSLRGEAVT (64 aa).

It belongs to the methylthiotransferase family. MiaB subfamily. In terms of assembly, monomer. [4Fe-4S] cluster serves as cofactor.

Its subcellular location is the cytoplasm. It carries out the reaction N(6)-dimethylallyladenosine(37) in tRNA + (sulfur carrier)-SH + AH2 + 2 S-adenosyl-L-methionine = 2-methylsulfanyl-N(6)-dimethylallyladenosine(37) in tRNA + (sulfur carrier)-H + 5'-deoxyadenosine + L-methionine + A + S-adenosyl-L-homocysteine + 2 H(+). Functionally, catalyzes the methylthiolation of N6-(dimethylallyl)adenosine (i(6)A), leading to the formation of 2-methylthio-N6-(dimethylallyl)adenosine (ms(2)i(6)A) at position 37 in tRNAs that read codons beginning with uridine. The polypeptide is tRNA-2-methylthio-N(6)-dimethylallyladenosine synthase (Thiobacillus denitrificans (strain ATCC 25259 / T1)).